A 318-amino-acid polypeptide reads, in one-letter code: UDP-N-acetylenolpyruvoylglucosamine reductase (318 aa).

In terms of domain architecture, FAD-binding PCMH-type spans 38-204; that stretch reads IGGICPVVVE…LGIEILLKEG (167 aa). The active site involves Arg-182. The segment at 212 to 232 is disordered; it reads SLKDKRDRRNSSQPENKKSAG. Basic and acidic residues predominate over residues 213-229; sequence LKDKRDRRNSSQPENKK. Ser-233 acts as the Proton donor in catalysis. Glu-310 is a catalytic residue.

The protein belongs to the MurB family. The cofactor is FAD.

Its subcellular location is the cytoplasm. It catalyses the reaction UDP-N-acetyl-alpha-D-muramate + NADP(+) = UDP-N-acetyl-3-O-(1-carboxyvinyl)-alpha-D-glucosamine + NADPH + H(+). The protein operates within cell wall biogenesis; peptidoglycan biosynthesis. Functionally, cell wall formation. The chain is UDP-N-acetylenolpyruvoylglucosamine reductase from Leptospira borgpetersenii serovar Hardjo-bovis (strain JB197).